The sequence spans 480 residues: Probable histone deacetylase 1-B (480 aa).

The segment at 10–321 (KVCYYYDGDV…WTYETAVALD (312 aa)) is histone deacetylase. Residue His141 is part of the active site. A disordered region spans residues 387–480 (DSVHDDSGEE…KRVKEETKSV (94 aa)). Basic and acidic residues predominate over residues 401-416 (PDKRISIRSSDKRIAC). Over residues 417-427 (DEEFSDSEDEG) the composition is skewed to acidic residues. Positions 443–480 (VKTEEEKEGEDKKDVKEEEKAKDEKTDSKRVKEETKSV) are enriched in basic and acidic residues.

It belongs to the histone deacetylase family. HD type 1 subfamily. As to quaternary structure, found in a large complex with RBBP4 and MI-2.

The protein resides in the nucleus. It localises to the cytoplasm. It catalyses the reaction N(6)-acetyl-L-lysyl-[histone] + H2O = L-lysyl-[histone] + acetate. The enzyme catalyses N(6)-acetyl-L-lysyl-[protein] + H2O = L-lysyl-[protein] + acetate. It carries out the reaction N(6)-(2E)-butenoyl-L-lysyl-[protein] + H2O = (2E)-2-butenoate + L-lysyl-[protein]. In terms of biological role, histone deacetylase that catalyzes the deacetylation of lysine residues on the N-terminal part of the core histones (H2A, H2B, H3 and H4). Histone deacetylation gives a tag for epigenetic repression and plays an important role in transcriptional regulation, cell cycle progression and developmental events. Histone deacetylases act via the formation of large multiprotein complexes. Also functions as a deacetylase for non-histone proteins. In addition to protein deacetylase activity, also has protein-lysine deacylase activity: acts as a protein decrotonylase by mediating decrotonylation ((2E)-butenoyl) of histones. This is Probable histone deacetylase 1-B (hdac1-b) from Xenopus laevis (African clawed frog).